Reading from the N-terminus, the 59-residue chain is Large ribosomal subunit protein uL30 (59 aa).

Belongs to the universal ribosomal protein uL30 family. Part of the 50S ribosomal subunit.

This chain is Large ribosomal subunit protein uL30, found in Rhodococcus jostii (strain RHA1).